The primary structure comprises 168 residues: mRNA stability protein IGO1 (168 aa).

The span at 1-13 (MSNENLSPNSSNP) shows a compositional bias: low complexity. A disordered region spans residues 1–31 (MSNENLSPNSSNPDLTKLNNGESGTIDTSKF). Positions 17 to 31 (KLNNGESGTIDTSKF) are enriched in polar residues. Phosphoserine occurs at positions 32 and 64. Residues 125–168 (KEGSISSGPPSSNNGTIGGGSTSSTPVGNHSSSSSSLYTESPIR) are disordered. 2 stretches are compositionally biased toward low complexity: residues 127-139 (GSIS…SNNG) and 146-168 (TSST…SPIR).

It belongs to the endosulfine family. Interacts with RIM15, DHH1, PBP1, PBP4 and LSM12. In terms of processing, phosphorylated at Ser-64 by RIM15.

Functionally, required for TORC1 to properly control gene expression and chronological life span. Plays an essential role in initiation of the G0 program by preventing the degradation of specific nutrient-regulated mRNAs via the 5'-3' mRNA decay pathway. This chain is mRNA stability protein IGO1 (IGO1), found in Saccharomyces cerevisiae (strain ATCC 204508 / S288c) (Baker's yeast).